The chain runs to 117 residues: Biogenesis of lysosome-related organelles complex 1 subunit BLS1 (117 aa).

A disordered region spans residues 97–117; that stretch reads EGKAQDTEQAPGKGDRIFRSD.

It belongs to the BLOC1S1 family. As to quaternary structure, component of the biogenesis of lysosome-related organelles complex-1 (BLOC-1).

The protein localises to the endosome. Functionally, component of the biogenesis of lysosome-related organelles complex-1 (BLOC-1), a complex involved in endosomal cargo sorting. In Eremothecium gossypii (strain ATCC 10895 / CBS 109.51 / FGSC 9923 / NRRL Y-1056) (Yeast), this protein is Biogenesis of lysosome-related organelles complex 1 subunit BLS1 (BLS1).